We begin with the raw amino-acid sequence, 355 residues long: Probable cinnamyl alcohol dehydrogenase (355 aa).

Residue C47 coordinates Zn(2+). S49 is an NADP(+) binding site. H69, E70, C100, C103, C106, C114, and C162 together coordinate Zn(2+). Residues T166, G187–G192, S210–K215, T250, G274, and S297–I299 contribute to the NADP(+) site.

This sequence belongs to the zinc-containing alcohol dehydrogenase family. As to quaternary structure, homodimer. It depends on Zn(2+) as a cofactor.

The enzyme catalyses (E)-cinnamyl alcohol + NADP(+) = (E)-cinnamaldehyde + NADPH + H(+). It catalyses the reaction (E)-coniferol + NADP(+) = (E)-coniferaldehyde + NADPH + H(+). It carries out the reaction (E)-sinapyl alcohol + NADP(+) = (E)-sinapaldehyde + NADPH + H(+). The catalysed reaction is (E)-4-coumaroyl alcohol + NADP(+) = (E)-4-coumaraldehyde + NADPH + H(+). The enzyme catalyses (E)-caffeyl alcohol + NADP(+) = (E)-caffeyl aldehyde + NADPH + H(+). It participates in aromatic compound metabolism; phenylpropanoid biosynthesis. In terms of biological role, involved in lignin biosynthesis. Catalyzes the final step specific for the production of lignin monomers. Catalyzes the NADPH-dependent reduction of coniferaldehyde, 5-hydroxyconiferaldehyde, sinapaldehyde, 4-coumaraldehyde and caffeyl aldehyde to their respective alcohols. The protein is Probable cinnamyl alcohol dehydrogenase (CAD1) of Eucalyptus botryoides (Southern mahogany).